Reading from the N-terminus, the 59-residue chain is Large ribosomal subunit protein uL30 (59 aa).

Belongs to the universal ribosomal protein uL30 family. Part of the 50S ribosomal subunit.

This is Large ribosomal subunit protein uL30 from Clostridium botulinum (strain Alaska E43 / Type E3).